A 201-amino-acid polypeptide reads, in one-letter code: uncharacterized protein (201 aa).

This is an uncharacterized protein from Cestrum yellow leaf curling virus (CmYLCV).